We begin with the raw amino-acid sequence, 261 residues long: MTQSTSRVALVTGATSGIGLATARLLAAQGHLVFLGARTESDVIATVKALRNDGLEAEGQVLDVRDGASVTAFVQAAVDRYGRIDVLVNNAGRSGGGVTADLTDELWDDVIDTNLNSVFRMTRAVLTTGGMRTRERGRIINVASTAGKQGVVLGAPYSASKHGVVGFTKALGNELAPTGITVNAVCPGYVETPMAQRVRQGYAAAYDTTEEAILTKFQAKIPLGRYSTPEEVAGLIGYLASDTAASITSQALNVCGGLGNF.

Residue 10-34 (LVTGATSGIGLATARLLAAQGHLVF) coordinates NAD(+). Ser-144 serves as a coordination point for substrate. Residue Tyr-157 is the Proton acceptor of the active site.

This sequence belongs to the short-chain dehydrogenases/reductases (SDR) family.

The protein operates within antifungal biosynthesis; monensin biosynthesis. In Streptomyces virginiae (Streptomyces cinnamonensis), this protein is Monensin polyketide synthase putative ketoacyl reductase.